We begin with the raw amino-acid sequence, 243 residues long: Cell division protein ZipA (243 aa).

The Periplasmic portion of the chain corresponds to 1-4 (MSDV). Residues 5–25 (TLLRIGIAIVGILFVAAVFFF) form a helical membrane-spanning segment. Residues 26–243 (STPKTSAHRV…VPPLIKNSRW (218 aa)) lie on the Cytoplasmic side of the membrane. Residues 32–89 (AHRVRTKKEEPPRERREPMLSTEVDNSPHQSVDEVPASVPQQQVNPEATKPGEIELGK) are disordered. A compositionally biased stretch (basic and acidic residues) spans 38 to 49 (KKEEPPRERREP).

This sequence belongs to the ZipA family. Interacts with FtsZ via their C-terminal domains.

It is found in the cell inner membrane. Functionally, essential cell division protein that stabilizes the FtsZ protofilaments by cross-linking them and that serves as a cytoplasmic membrane anchor for the Z ring. Also required for the recruitment to the septal ring of downstream cell division proteins. This Xylella fastidiosa (strain Temecula1 / ATCC 700964) protein is Cell division protein ZipA.